We begin with the raw amino-acid sequence, 352 residues long: Protein RecA (352 aa).

67-74 (GPESSGKT) is an ATP binding site.

Belongs to the RecA family.

The protein localises to the cytoplasm. Can catalyze the hydrolysis of ATP in the presence of single-stranded DNA, the ATP-dependent uptake of single-stranded DNA by duplex DNA, and the ATP-dependent hybridization of homologous single-stranded DNAs. It interacts with LexA causing its activation and leading to its autocatalytic cleavage. The polypeptide is Protein RecA (Aggregatibacter actinomycetemcomitans (Actinobacillus actinomycetemcomitans)).